Consider the following 447-residue polypeptide: Ion-translocating oxidoreductase complex subunit C (447 aa).

2 consecutive 4Fe-4S ferredoxin-type domains span residues Ala-359–Ala-389 and Arg-399–Tyr-430. Positions 369, 372, 375, 379, 408, 411, 414, and 418 each coordinate [4Fe-4S] cluster.

The protein belongs to the 4Fe4S bacterial-type ferredoxin family. RnfC subfamily. The Rnf complex is probably composed of eight subunits, including RnfA, RnfB, RnfC, RnfD, RnfE and RnfG. Requires [4Fe-4S] cluster as cofactor.

The protein resides in the cell membrane. Part of a membrane-bound complex that couples electron transfer with translocation of ions across the membrane. Catalyzes Na(+) transport, most probably coupled to electron transfer from reduced ferredoxin to methanophenazine and heterodisulfide reductase. Involved in heterodisulfide reduction during methanogenesis from acetate. This Methanosarcina acetivorans (strain ATCC 35395 / DSM 2834 / JCM 12185 / C2A) protein is Ion-translocating oxidoreductase complex subunit C.